The primary structure comprises 348 residues: tRNA N6-adenosine threonylcarbamoyltransferase (348 aa).

Residues histidine 120 and histidine 124 each coordinate Fe cation. Substrate is bound by residues 143–147, aspartate 176, glycine 189, and asparagine 282; that span reads LVSGG. Aspartate 310 contributes to the Fe cation binding site.

The protein belongs to the KAE1 / TsaD family. Fe(2+) serves as cofactor.

Its subcellular location is the cytoplasm. It carries out the reaction L-threonylcarbamoyladenylate + adenosine(37) in tRNA = N(6)-L-threonylcarbamoyladenosine(37) in tRNA + AMP + H(+). Functionally, required for the formation of a threonylcarbamoyl group on adenosine at position 37 (t(6)A37) in tRNAs that read codons beginning with adenine. Is involved in the transfer of the threonylcarbamoyl moiety of threonylcarbamoyl-AMP (TC-AMP) to the N6 group of A37, together with TsaE and TsaB. TsaD likely plays a direct catalytic role in this reaction. In Paracidovorax citrulli (strain AAC00-1) (Acidovorax citrulli), this protein is tRNA N6-adenosine threonylcarbamoyltransferase.